A 131-amino-acid polypeptide reads, in one-letter code: Small ribosomal subunit protein uS8 (131 aa).

It belongs to the universal ribosomal protein uS8 family. Part of the 30S ribosomal subunit. Contacts proteins S5 and S12.

Its function is as follows. One of the primary rRNA binding proteins, it binds directly to 16S rRNA central domain where it helps coordinate assembly of the platform of the 30S subunit. The protein is Small ribosomal subunit protein uS8 of Bordetella parapertussis (strain 12822 / ATCC BAA-587 / NCTC 13253).